The primary structure comprises 194 residues: Peptidyl-tRNA hydrolase (194 aa).

Tyrosine 16 contributes to the tRNA binding site. Catalysis depends on histidine 21, which acts as the Proton acceptor. TRNA contacts are provided by phenylalanine 67, asparagine 69, and asparagine 115.

The protein belongs to the PTH family. In terms of assembly, monomer.

The protein localises to the cytoplasm. It carries out the reaction an N-acyl-L-alpha-aminoacyl-tRNA + H2O = an N-acyl-L-amino acid + a tRNA + H(+). Functionally, hydrolyzes ribosome-free peptidyl-tRNAs (with 1 or more amino acids incorporated), which drop off the ribosome during protein synthesis, or as a result of ribosome stalling. In terms of biological role, catalyzes the release of premature peptidyl moieties from peptidyl-tRNA molecules trapped in stalled 50S ribosomal subunits, and thus maintains levels of free tRNAs and 50S ribosomes. This chain is Peptidyl-tRNA hydrolase, found in Escherichia coli O17:K52:H18 (strain UMN026 / ExPEC).